The chain runs to 251 residues: Segregation and condensation protein A (251 aa).

It belongs to the ScpA family. Component of a cohesin-like complex composed of ScpA, ScpB and the Smc homodimer, in which ScpA and ScpB bind to the head domain of Smc. The presence of the three proteins is required for the association of the complex with DNA.

It is found in the cytoplasm. In terms of biological role, participates in chromosomal partition during cell division. May act via the formation of a condensin-like complex containing Smc and ScpB that pull DNA away from mid-cell into both cell halves. The sequence is that of Segregation and condensation protein A from Clostridium botulinum (strain Alaska E43 / Type E3).